The primary structure comprises 359 residues: UPF0283 membrane protein RHE_CH02332 (359 aa).

The interval methionine 1–aspartate 61 is disordered. 2 helical membrane passes run phenylalanine 77–threonine 97 and leucine 111–isoleucine 131.

It belongs to the UPF0283 family.

It is found in the cell inner membrane. In Rhizobium etli (strain ATCC 51251 / DSM 11541 / JCM 21823 / NBRC 15573 / CFN 42), this protein is UPF0283 membrane protein RHE_CH02332.